We begin with the raw amino-acid sequence, 213 residues long: Peptidyl-tRNA hydrolase (213 aa).

Tyr15 is a binding site for tRNA. The active-site Proton acceptor is the His20. TRNA is bound by residues Phe66, Asn68, and Asn114. Residues 187–213 (HTTKPPRPKPPRPAAAPVDAPAAPGDQ) form a disordered region. The span at 201-213 (AAPVDAPAAPGDQ) shows a compositional bias: low complexity.

It belongs to the PTH family. Monomer.

It is found in the cytoplasm. The enzyme catalyses an N-acyl-L-alpha-aminoacyl-tRNA + H2O = an N-acyl-L-amino acid + a tRNA + H(+). Functionally, hydrolyzes ribosome-free peptidyl-tRNAs (with 1 or more amino acids incorporated), which drop off the ribosome during protein synthesis, or as a result of ribosome stalling. Catalyzes the release of premature peptidyl moieties from peptidyl-tRNA molecules trapped in stalled 50S ribosomal subunits, and thus maintains levels of free tRNAs and 50S ribosomes. In Paracidovorax citrulli (strain AAC00-1) (Acidovorax citrulli), this protein is Peptidyl-tRNA hydrolase.